A 254-amino-acid chain; its full sequence is Lipid uptake coordinator A (254 aa).

The next 4 membrane-spanning stretches (helical) occupy residues 5–25, 44–64, 85–105, and 114–134; these read VAVLWHASFSIGAGVLYFYFV, LRIATGALVGLAALPVVFTLL, IMAHVLAGALIVGTAISEVWL, and LFGIYGAAAAIAVLGFFGFYL. The tract at residues 143-254 is disordered; it reads PPPKPLKPKK…SGVQVAKVDE (112 aa). Basic residues predominate over residues 148–163; sequence LKPKKPKQRRLRRKKT. Residues 169 to 191 are compositionally biased toward acidic residues; that stretch reads AEPEAAEEAENTELAAQEDEEAV. Residues 192-220 are compositionally biased toward low complexity; the sequence is EAPPESIESPGGEPESATREAPAAETATA. Residues 227 to 244 show a composition bias toward basic residues; it reads LRNRRPTGKTSHRRRRTR.

Interacts with the Mce1 and Mce4 accessory subunits Rv0199/OmamA, Rv0177/Mam1C and Rv3492c/Mam4B.

It localises to the cell membrane. Functionally, required for the import of both fatty acids and cholesterol during growth in macrophages and in axenic culture. Facilitates the uptake of these lipids by stabilizing protein subunits of the Mce1 and Mce4 multi-subunit transporters, which transport fatty acids and cholesterol, respectively. Required for full virulence in vivo. The sequence is that of Lipid uptake coordinator A from Mycobacterium tuberculosis (strain ATCC 25618 / H37Rv).